Consider the following 380-residue polypeptide: Acyl-lipid (9+3)-(E)-desaturase (380 aa).

The interval methionine 1 to tyrosine 25 is disordered. Positions valine 9–asparagine 18 are enriched in polar residues. The next 2 membrane-spanning stretches (helical) occupy residues leucine 52 to phenylalanine 72 and alanine 81 to isoleucine 101. Residues histidine 103 to histidine 107 carry the Histidine box-1 motif. The short motif at histidine 139–histidine 143 is the Histidine box-2 element. 3 helical membrane passes run isoleucine 177–serine 197, isoleucine 223–valine 243, and valine 247–valine 267. The Histidine box-3 motif lies at histidine 313–histidine 317.

The protein belongs to the fatty acid desaturase type 1 family.

Its subcellular location is the membrane. The enzyme catalyses a (9Z)-octadecenoyl-containing glycerolipid + 2 Fe(II)-[cytochrome b5] + O2 + 2 H(+) = a (9Z,12E)-octadecadienoyl-containing glycerolipid + 2 Fe(III)-[cytochrome b5] + 2 H2O. It catalyses the reaction a (9Z)-hexadecenoyl-containing glycerolipid + 2 Fe(II)-[cytochrome b5] + O2 + 2 H(+) = a (9Z,12E)-hexadecadienoyl-containing glycerolipid + 2 Fe(III)-[cytochrome b5] + 2 H2O. In terms of biological role, involved in the biosynthesis of dimorphecolic acid (9-OH-18:2(10E,12E)). Converts oleic acid (18:1(9Z)) into 18:2(9Z,12E) and probably palmitoleic acid (16:1(9Z)) into 16:2(9Z,12E). Very limited ability to catalyze (Z)-delta(12) desaturation. The polypeptide is Acyl-lipid (9+3)-(E)-desaturase (Dimorphotheca sinuata (African daisy)).